We begin with the raw amino-acid sequence, 82 residues long: MNELRCGCPDCHCKVDPERVFNHDGEAYCSQACAEQHPNGEPCPAPDCHCERSGKVGGRDITNNQLDEALEETFPASDPISP.

Cd(2+)-binding residues include Cys6, Cys8, Cys11, Cys13, Cys29, Cys33, His37, Cys43, Cys48, and Cys50. 3 residues coordinate Zn(2+): Cys6, Cys8, and Cys11. Positions 29, 33, 37, 43, 48, and 50 each coordinate Zn(2+). The segment at 61-82 (ITNNQLDEALEETFPASDPISP) is disordered.

Belongs to the metallothionein superfamily.

Metallothioneins are small proteins that have a high content of cysteine residues which allow them to bind heavy metal ions through clusters of thiolate bonds. Preferentially, binds four Cd(2+) ions. Also binds three Zn(2+) ions but with less affinity. Required for long-term viability. May play a role in the storage or sequestration of metals when present in excess. In Pseudomonas fluorescens (strain Q2-87), this protein is Metallothionein.